The chain runs to 362 residues: Putative protein ARB2BP (362 aa).

A helical membrane pass occupies residues 229 to 245 (IAFIVHGYGGLVFMDLL).

It belongs to the ARB2 family.

The protein localises to the membrane. The protein is Putative protein ARB2BP of Homo sapiens (Human).